A 311-amino-acid polypeptide reads, in one-letter code: MNAPASPAASPSQRARKPDWIRVKAPTSPGYAETRKLMRELNLHTVCEEAACPNIGECWTKKHATVMILGDTCTRACAFCNVKTGMPRPVDLLEPEHTAIAAAKMGLSHIVITSVDRDDLPDGGASQFVKVINALRRETPQTTIEILTPDFRNKPESAVAAIVDARPDVYNHNLETVPRLYPTIRPGARYYASLRLLESVKRRDPSIFTKSGIMLGLGEERMEVHQVMDDMRSADIDFMTMGQYLQPTPKHAKVIDFVTPQAFDAYAQIARAKGFLQVASSPLTRSSYHAGDDFEHMRAAREAQLARVRAD.

Cys47, Cys52, Cys58, Cys73, Cys77, Cys80, and Ser287 together coordinate [4Fe-4S] cluster. The 218-residue stretch at 59–276 (WTKKHATVMI…AQIARAKGFL (218 aa)) folds into the Radical SAM core domain.

This sequence belongs to the radical SAM superfamily. Lipoyl synthase family. The cofactor is [4Fe-4S] cluster.

The protein localises to the cytoplasm. The catalysed reaction is [[Fe-S] cluster scaffold protein carrying a second [4Fe-4S](2+) cluster] + N(6)-octanoyl-L-lysyl-[protein] + 2 oxidized [2Fe-2S]-[ferredoxin] + 2 S-adenosyl-L-methionine + 4 H(+) = [[Fe-S] cluster scaffold protein] + N(6)-[(R)-dihydrolipoyl]-L-lysyl-[protein] + 4 Fe(3+) + 2 hydrogen sulfide + 2 5'-deoxyadenosine + 2 L-methionine + 2 reduced [2Fe-2S]-[ferredoxin]. It participates in protein modification; protein lipoylation via endogenous pathway; protein N(6)-(lipoyl)lysine from octanoyl-[acyl-carrier-protein]: step 2/2. In terms of biological role, catalyzes the radical-mediated insertion of two sulfur atoms into the C-6 and C-8 positions of the octanoyl moiety bound to the lipoyl domains of lipoate-dependent enzymes, thereby converting the octanoylated domains into lipoylated derivatives. This chain is Lipoyl synthase, found in Sphingopyxis alaskensis (strain DSM 13593 / LMG 18877 / RB2256) (Sphingomonas alaskensis).